The primary structure comprises 501 residues: Flagellin (501 aa).

It belongs to the bacterial flagellin family.

It localises to the secreted. The protein resides in the bacterial flagellum. Functionally, flagellin is the subunit protein which polymerizes to form the filaments of bacterial flagella. In Salmonella choleraesuis (strain SC-B67), this protein is Flagellin (fliC).